Reading from the N-terminus, the 449-residue chain is Glutamate--tRNA ligase 2 (449 aa).

The short motif at proline 17–asparagine 27 is the 'HIGH' region element. The short motif at alanine 248–arginine 252 is the 'KMSKS' region element. Lysine 251 contributes to the ATP binding site.

Belongs to the class-I aminoacyl-tRNA synthetase family. Glutamate--tRNA ligase type 1 subfamily. In terms of assembly, monomer.

The protein resides in the cytoplasm. It catalyses the reaction tRNA(Glu) + L-glutamate + ATP = L-glutamyl-tRNA(Glu) + AMP + diphosphate. Functionally, catalyzes the attachment of glutamate to tRNA(Glu) in a two-step reaction: glutamate is first activated by ATP to form Glu-AMP and then transferred to the acceptor end of tRNA(Glu). In Jannaschia sp. (strain CCS1), this protein is Glutamate--tRNA ligase 2.